A 333-amino-acid chain; its full sequence is MNTDDTITIYDVAREAGVSMATVSRVVNGNKNVKENTRKKVLEVIDRLDYRPNAVARGLASKKTTTVGVVIPNIANAYFSILAKGIDDIATMYKYNIVLASSDEDDDKEVNVINTLFAKQVDGIIFMGHHLTEKIRAEFSRARTPVVLSGTVDLEHQLPSVNIDHSKAAQDAVALLAKHHDKIAFVSGPLIDDINGKVRLAGYKEGLKKKGLPFKEGLVFEAQYKYQEGYQLAQRVINSGATAAYVAEDELAAGLLNGLFAAGKKVPEDFEIITSNDSTIALYTRPNMTSISQPIYDLGAVAMRMLTKIMNKEELEEKEIVLNHGIRERGTTK.

Positions 7 to 61 (ITIYDVAREAGVSMATVSRVVNGNKNVKENTRKKVLEVIDRLDYRPNAVARGLAS) constitute an HTH lacI-type domain. Positions 9-28 (IYDVAREAGVSMATVSRVVN) form a DNA-binding region, H-T-H motif.

In terms of biological role, global transcriptional regulator of carbon catabolite repression (CCR) and carbon catabolite activation (CCA), which ensures optimal energy usage under diverse conditions. In Streptococcus mutans serotype c (strain ATCC 700610 / UA159), this protein is Catabolite control protein A (ccpA).